Reading from the N-terminus, the 562-residue chain is Tissue-type plasminogen activator (562 aa).

The first 19 residues, 1 to 19, serve as a signal peptide directing secretion; the sequence is MYALKRELWCVLLLCGAIC. The propeptide occupies 20 to 32; that stretch reads TSPSQETHRRLRR. The propeptide at 33-35 is removed by plasmin; the sequence is GVR. The 43-residue stretch at 39–81 folds into the Fibronectin type-I domain; that stretch reads VTCRDEKTQMIYQQHQSWLRPLLRGNRVEHCWCNDGQTQCHSV. Cystine bridges form between Cys-41–Cys-71, Cys-69–Cys-78, Cys-86–Cys-97, Cys-91–Cys-108, Cys-110–Cys-119, Cys-127–Cys-208, Cys-148–Cys-190, Cys-179–Cys-203, Cys-215–Cys-296, Cys-236–Cys-278, Cys-267–Cys-291, Cys-299–Cys-430, Cys-342–Cys-358, Cys-350–Cys-419, Cys-444–Cys-519, Cys-476–Cys-492, and Cys-509–Cys-537. Residues 42–52 are important for binding to annexin A2; sequence RDEKTQMIYQQ. One can recognise an EGF-like domain in the interval 82–120; the sequence is PVKSCSEPRCFNGGTCLQAIYFSDFVCQCPVGFIGRQCE. Thr-96 is a glycosylation site (O-linked (Fuc) threonine). Kringle domains follow at residues 126–208 and 214–296; these read TCYE…TPAC and ECYT…LPQC. A glycan (N-linked (GlcNAc...) asparagine) is linked at Asn-152. A Peptidase S1 domain is found at 311–561; sequence IKGGLYADIT…YLNWIRDNTR (251 aa). Residues His-357 and Asp-406 each act as charge relay system in the active site. A glycan (N-linked (GlcNAc...) asparagine) is linked at Asn-483. Ser-513 acts as the Charge relay system in catalysis.

The protein belongs to the peptidase S1 family. As to quaternary structure, heterodimer of chain A and chain B held by a disulfide bond. Binds to fibrin with high affinity. This interaction leads to an increase in the catalytic efficiency of the enzyme due to an increase in affinity for plasminogen. Similarly, binding to heparin increases the activation of plasminogen. Binds to annexin A2, cytokeratin-8, fibronectin and laminin. Binds to mannose receptor and the low-density lipoprotein receptor-related protein (LRP1); these proteins are involved in TPA clearance. Binds LRP1B; binding is followed by internalization and degradation. Forms heterodimer with SERPINA5. Interacts with SERPINE1. In complex with SERPINE1, interacts with SORL1. Post-translationally, the single chain, almost fully active enzyme, can be further processed into a two-chain fully active form by a cleavage after Arg-310 catalyzed by plasmin, tissue kallikrein or factor Xa.

The protein localises to the secreted. It is found in the extracellular space. The catalysed reaction is Specific cleavage of Arg-|-Val bond in plasminogen to form plasmin.. With respect to regulation, inhibited by SERPINA5. Inhibited by SERPINE1. Its function is as follows. Converts the abundant, but inactive, zymogen plasminogen to plasmin by hydrolyzing a single Arg-Val bond in plasminogen. By controlling plasmin-mediated proteolysis, it plays an important role in tissue remodeling and degradation, in cell migration and many other physiopathological events. During oocyte activation, plays a role in cortical granule reaction in the zona reaction, which contributes to the block to polyspermy. The chain is Tissue-type plasminogen activator (PLAT) from Sus scrofa (Pig).